The sequence spans 227 residues: Probable septum site-determining protein MinC (227 aa).

It belongs to the MinC family. Interacts with MinD and FtsZ.

Cell division inhibitor that blocks the formation of polar Z ring septums. Rapidly oscillates between the poles of the cell to destabilize FtsZ filaments that have formed before they mature into polar Z rings. Prevents FtsZ polymerization. The polypeptide is Probable septum site-determining protein MinC (Photorhabdus laumondii subsp. laumondii (strain DSM 15139 / CIP 105565 / TT01) (Photorhabdus luminescens subsp. laumondii)).